The primary structure comprises 206 residues: Ras-related protein RABG3e (206 aa).

15-22 is a GTP binding site; that stretch reads GDSGVGKT. The Effector region signature appears at 37–45; it reads YKATIGADF. Residues 63–67, 125–128, and 158–159 each bind GTP; these read DTAGQ, NKID, and SA. S-geranylgeranyl cysteine attachment occurs at residues cysteine 204 and cysteine 206. Cysteine 206 carries the post-translational modification Cysteine methyl ester.

Belongs to the small GTPase superfamily. Rab family.

The protein localises to the cell membrane. In terms of biological role, intracellular vesicle trafficking and protein transport. May play a role in adaptation to stress by recylcing macromolecules in specific cellular compartments. This Arabidopsis thaliana (Mouse-ear cress) protein is Ras-related protein RABG3e (RABG3E).